Here is a 364-residue protein sequence, read N- to C-terminus: Mannose-1-phosphate guanyltransferase (364 aa).

This sequence belongs to the transferase hexapeptide repeat family.

It is found in the cytoplasm. The enzyme catalyses alpha-D-mannose 1-phosphate + GTP + H(+) = GDP-alpha-D-mannose + diphosphate. It participates in nucleotide-sugar biosynthesis; GDP-alpha-D-mannose biosynthesis; GDP-alpha-D-mannose from alpha-D-mannose 1-phosphate (GTP route): step 1/1. Its function is as follows. Involved in cell wall synthesis where it is required for glycosylation. Involved in cell cycle progression through cell-size checkpoint. The protein is Mannose-1-phosphate guanyltransferase (mpg1) of Aspergillus fumigatus (strain ATCC MYA-4609 / CBS 101355 / FGSC A1100 / Af293) (Neosartorya fumigata).